A 681-amino-acid chain; its full sequence is Epithelial splicing regulatory protein 1 (681 aa).

3 RRM domains span residues 225-302 (TVVR…KATG), 326-406 (VIVR…RSTA), and 445-525 (DCIR…QCSA). Position 543 is a phosphoserine (serine 543). Arginine 582 bears the Omega-N-methylarginine mark.

This sequence belongs to the ESRP family. As to expression, epithelial cell-specific.

The protein resides in the nucleus. Functionally, mRNA splicing factor that regulates the formation of epithelial cell-specific isoforms. Specifically regulates the expression of FGFR2-IIIb, an epithelial cell-specific isoform of FGFR2. Also regulates the splicing of CD44, CTNND1, ENAH, 3 transcripts that undergo changes in splicing during the epithelial-to-mesenchymal transition (EMT). Acts by directly binding specific sequences in mRNAs. Binds the GU-rich sequence motifs in the ISE/ISS-3, a cis-element regulatory region present in the mRNA of FGFR2. Regulates splicing and expression of genes involved in inner ear development, auditory hair cell differentiation, and cell fate specification in the cochlear epithelium. This chain is Epithelial splicing regulatory protein 1 (ESRP1), found in Homo sapiens (Human).